The following is a 510-amino-acid chain: Light-independent protochlorophyllide reductase subunit B (510 aa).

Aspartate 36 contributes to the [4Fe-4S] cluster binding site. The active-site Proton donor is aspartate 296. 431–432 provides a ligand contact to substrate; sequence GM.

It belongs to the ChlB/BchB/BchZ family. In terms of assembly, protochlorophyllide reductase is composed of three subunits; ChlL, ChlN and ChlB. Forms a heterotetramer of two ChlB and two ChlN subunits. The cofactor is [4Fe-4S] cluster.

The protein localises to the plastid. Its subcellular location is the chloroplast. The enzyme catalyses chlorophyllide a + oxidized 2[4Fe-4S]-[ferredoxin] + 2 ADP + 2 phosphate = protochlorophyllide a + reduced 2[4Fe-4S]-[ferredoxin] + 2 ATP + 2 H2O. It functions in the pathway porphyrin-containing compound metabolism; chlorophyll biosynthesis (light-independent). Component of the dark-operative protochlorophyllide reductase (DPOR) that uses Mg-ATP and reduced ferredoxin to reduce ring D of protochlorophyllide (Pchlide) to form chlorophyllide a (Chlide). This reaction is light-independent. The NB-protein (ChlN-ChlB) is the catalytic component of the complex. The polypeptide is Light-independent protochlorophyllide reductase subunit B (Stigeoclonium helveticum (Green alga)).